The primary structure comprises 231 residues: TATA-box-binding protein (231 aa).

Tandem repeats lie at residues 58–134 (LQNI…ARII) and 148–225 (IQNI…YPVL).

This sequence belongs to the TBP family. Belongs to the TFIID complex together with the TBP-associated factors (TAFs). Binds DNA as monomer.

It is found in the nucleus. Functionally, general transcription factor that functions at the core of the DNA-binding multiprotein factor TFIID. Binding of TFIID to the TATA box is the initial transcriptional step of the pre-initiation complex (PIC), playing a role in the activation of eukaryotic genes transcribed by RNA polymerase II. The polypeptide is TATA-box-binding protein (tbp1) (Schizosaccharomyces pombe (strain 972 / ATCC 24843) (Fission yeast)).